The primary structure comprises 108 residues: ATP-dependent Clp protease adapter protein ClpS (108 aa).

Positions 1–15 (MPRESSPDSHHEHGV) are enriched in basic and acidic residues. The segment at 1 to 24 (MPRESSPDSHHEHGVAVEPARPEV) is disordered.

The protein belongs to the ClpS family. As to quaternary structure, binds to the N-terminal domain of the chaperone ClpA.

Its function is as follows. Involved in the modulation of the specificity of the ClpAP-mediated ATP-dependent protein degradation. This chain is ATP-dependent Clp protease adapter protein ClpS, found in Stenotrophomonas maltophilia (strain R551-3).